A 521-amino-acid polypeptide reads, in one-letter code: Glutamate--tRNA ligase (521 aa).

Positions 30–40 match the 'HIGH' region motif; that stretch reads PSPTGYLHVGG. The 'KMSKS' region motif lies at 277–281; sequence KLSKR. Lysine 280 is a binding site for ATP.

The protein belongs to the class-I aminoacyl-tRNA synthetase family. Glutamate--tRNA ligase type 1 subfamily. As to quaternary structure, monomer.

The protein resides in the cytoplasm. The enzyme catalyses tRNA(Glu) + L-glutamate + ATP = L-glutamyl-tRNA(Glu) + AMP + diphosphate. In terms of biological role, catalyzes the attachment of glutamate to tRNA(Glu) in a two-step reaction: glutamate is first activated by ATP to form Glu-AMP and then transferred to the acceptor end of tRNA(Glu). In Chlorobium phaeovibrioides (strain DSM 265 / 1930) (Prosthecochloris vibrioformis (strain DSM 265)), this protein is Glutamate--tRNA ligase.